The chain runs to 207 residues: dTTP/UTP pyrophosphatase (207 aa).

D86 acts as the Proton acceptor in catalysis.

This sequence belongs to the Maf family. YhdE subfamily. Requires a divalent metal cation as cofactor.

The protein localises to the cytoplasm. It carries out the reaction dTTP + H2O = dTMP + diphosphate + H(+). The enzyme catalyses UTP + H2O = UMP + diphosphate + H(+). Functionally, nucleoside triphosphate pyrophosphatase that hydrolyzes dTTP and UTP. May have a dual role in cell division arrest and in preventing the incorporation of modified nucleotides into cellular nucleic acids. The polypeptide is dTTP/UTP pyrophosphatase (Nitrosospira multiformis (strain ATCC 25196 / NCIMB 11849 / C 71)).